Consider the following 901-residue polypeptide: Vacuolar protein sorting-associated protein 41 homolog (901 aa).

The tract at residues 1–37 (MDETHENEASDSFDPVFENSYHDDVTFNTEDDDEPPL) is disordered. The CHCR repeat unit spans residues 618 to 760 (LRLLLDNADS…VAEFPAHFSQ (143 aa)). Residues 839 to 893 (CSLCAQIIINSNQETTKKFSDIKVFKCGHIFHLACSTSEMERRQSIEEGLCIACS) form an RING-type; atypical zinc finger.

Belongs to the VPS41 family. In terms of assembly, probable component of the homotypic fusion and vacuole protein sorting (HOPS) complex consisting of the core class C Vps proteins vps-11, vps-16, vps-18, and which further associates with vps-33.1, vps-39 and vps-41.

The protein localises to the endosome membrane. The protein resides in the late endosome membrane. It localises to the early endosome membrane. Its subcellular location is the lysosome membrane. It is found in the golgi apparatus. The protein localises to the trans-Golgi network. The protein resides in the cytoplasmic vesicle. It localises to the clathrin-coated vesicle. Its subcellular location is the cytoplasm. It is found in the cytosol. In terms of biological role, plays a role in vesicle-mediated protein trafficking to lysosomal compartments including the endocytic membrane transport pathways. Believed to act in part as a core component of the putative HOPS endosomal tethering complex which is proposed to be involved in the rab-5-to-rab-7 endosome conversion probably implicating sand-1, and via binding SNAREs and SNARE complexes to mediate tethering and docking events during SNARE-mediated membrane fusion. The HOPS complex is proposed to be recruited to rab-7 on the late endosomal membrane and to regulate late endocytic, phagocytic and autophagic traffic towards lysosomes. Within the HOPS complex, contributes to the normal development of gut granules in the adult intestine. May mediate the tethering of autophagosomes with lysosomes. Has a role in the negative regulation of apoptosis. Required for uptake of exogenous dsRNA which is used in experimental RNA silencing. In Caenorhabditis elegans, this protein is Vacuolar protein sorting-associated protein 41 homolog.